A 511-amino-acid chain; its full sequence is GMP synthase [glutamine-hydrolyzing] (511 aa).

A Glutamine amidotransferase type-1 domain is found at 5 to 195 (AILVLDFGSQ…VFKICQAQIN (191 aa)). Residue Cys-82 is the Nucleophile of the active site. Residues His-169 and Glu-171 contribute to the active site. Residues 196-386 (WSLEGNLETI…LGIKKESLYR (191 aa)) form the GMPS ATP-PPase domain. Position 223–229 (223–229 (SGGTDSL)) interacts with ATP.

Homodimer.

It carries out the reaction XMP + L-glutamine + ATP + H2O = GMP + L-glutamate + AMP + diphosphate + 2 H(+). The protein operates within purine metabolism; GMP biosynthesis; GMP from XMP (L-Gln route): step 1/1. Functionally, catalyzes the synthesis of GMP from XMP. This chain is GMP synthase [glutamine-hydrolyzing] (guaA), found in Borreliella burgdorferi (strain ATCC 35210 / DSM 4680 / CIP 102532 / B31) (Borrelia burgdorferi).